Here is a 261-residue protein sequence, read N- to C-terminus: 5'-nucleotidase SurE (261 aa).

Positions 8, 9, 43, and 96 each coordinate a divalent metal cation.

The protein belongs to the SurE nucleotidase family. A divalent metal cation serves as cofactor.

Its subcellular location is the cytoplasm. The catalysed reaction is a ribonucleoside 5'-phosphate + H2O = a ribonucleoside + phosphate. Nucleotidase that shows phosphatase activity on nucleoside 5'-monophosphates. The protein is 5'-nucleotidase SurE of Cereibacter sphaeroides (strain KD131 / KCTC 12085) (Rhodobacter sphaeroides).